Here is a 516-residue protein sequence, read N- to C-terminus: GMP synthase [glutamine-hydrolyzing] (516 aa).

The Glutamine amidotransferase type-1 domain maps to 8-198 (KILILDFGSQ…VVNICGCDTL (191 aa)). The active-site Nucleophile is C84. Active-site residues include H172 and E174. In terms of domain architecture, GMPS ATP-PPase spans 199–391 (WNIENIIEND…LGLPYNMLYR (193 aa)). Position 226–232 (226–232 (SGGVDSS)) interacts with ATP.

In terms of assembly, homodimer.

It catalyses the reaction XMP + L-glutamine + ATP + H2O = GMP + L-glutamate + AMP + diphosphate + 2 H(+). It functions in the pathway purine metabolism; GMP biosynthesis; GMP from XMP (L-Gln route): step 1/1. Functionally, catalyzes the synthesis of GMP from XMP. In Francisella tularensis subsp. mediasiatica (strain FSC147), this protein is GMP synthase [glutamine-hydrolyzing].